A 157-amino-acid polypeptide reads, in one-letter code: Probable succinate transporter subunit YjjB (157 aa).

The next 4 membrane-spanning stretches (helical) occupy residues 2–22, 55–75, 87–107, and 129–149; these read GIISFIFALAEDMLLAAIPAV, AGFNIEWATFLAALLVGSIGI, IFTVAAVIPMFPGISAYTAMI, and FLKASSIVGALSIGLSIPGLW.

This sequence belongs to the ThrE exporter (TC 2.A.79) family. The transporter is composed of YjjB and YjjP.

It is found in the cell inner membrane. In terms of biological role, involved in succinate export with YjjP. Both proteins are required for export. The polypeptide is Probable succinate transporter subunit YjjB (Klebsiella pneumoniae (strain 342)).